The following is a 422-amino-acid chain: Synaptotagmin-1 (422 aa).

The Vesicular segment spans residues 1–57 (MVSESHHEALAAPPVTTVATVLPSNATEPASPGEGKEDAFSKLKEKFMNELHKIPLP). Asn25 carries an N-linked (GlcNAc...) asparagine glycan. The helical transmembrane segment at 58–80 (PWALIAIAIVAVLLVLTCCFCIC) threads the bilayer. Residues Cys75, Cys76, Cys78, Cys80, and Cys83 are each lipidated (S-palmitoyl cysteine). The Cytoplasmic segment spans residues 81 to 422 (KKCLFKKKNK…EVDAMLAVKK (342 aa)). Residues 113–142 (TMKDQALKDDDAETGLTDGEEKEEPKEEEK) form a disordered region. Residues 122–134 (DDAETGLTDGEEK) show a composition bias toward acidic residues. Position 129 is a phosphothreonine (Thr129). Residues 136–382 (EPKEEEKLGK…AIGKVFVGYN (247 aa)) are phospholipid binding. The C2 1 domain maps to 142-261 (KLGKLQYSLD…DFGHVTEEWR (120 aa)). The Ca(2+) site is built by Leu172, Asp173, and Asp179. Tyr230 is subject to Phosphotyrosine. Asp231, Phe232, Asp233, Ser236, Lys237, and Asp239 together coordinate Ca(2+). Position 265 is a phosphoserine (Ser265). The 134-residue stretch at 273–406 (KLGDICFSLR…NPRRPIAQWH (134 aa)) folds into the C2 2 domain. Ca(2+) contacts are provided by Asp304 and Asp310. 2 positions are modified to phosphoserine: Ser343 and Ser345. Residues Asp364, Asp366, and Asp372 each contribute to the Ca(2+) site.

Belongs to the synaptotagmin family. As to quaternary structure, homotetramer. Heterodimer; heterodimerizes with SYT2 in presence of calcium. Interacts with SCAMP5. Interacts with STON2. Forms a complex with SV2B, syntaxin 1 and SNAP25. Interacts with SV2A, SV2B and SV2C. Interacts with RIMS1. Interacts with PRRT2. Interacts with DNAJC5 in a phosphorylation-dependent manner. Interacts (via N-terminus) with RAB3A. Interacts with SYT12. Interacts with calmodulin. Interacts with DNM1 (via C-terminal proline-rich domain (PRD)); this interaction facilitates vesicle fission during clathrin-mediated endocytosis (CME). It depends on Ca(2+) as a cofactor. Post-translationally, glycosylated. Expressed in melanocytes.

The protein resides in the cytoplasmic vesicle. It localises to the secretory vesicle membrane. The protein localises to the secretory vesicle. It is found in the synaptic vesicle membrane. Its subcellular location is the chromaffin granule membrane. The protein resides in the cytoplasm. In terms of biological role, calcium sensor that participates in triggering neurotransmitter release at the synapse. May have a regulatory role in the membrane interactions during trafficking of synaptic vesicles at the active zone of the synapse. It binds acidic phospholipids with a specificity that requires the presence of both an acidic head group and a diacyl backbone. A Ca(2+)-dependent interaction between synaptotagmin and putative receptors for activated protein kinase C has also been reported. It can bind to at least three additional proteins in a Ca(2+)-independent manner; these are neurexins, syntaxin and AP2. Plays a role in dendrite formation by melanocytes. The chain is Synaptotagmin-1 from Homo sapiens (Human).